Here is a 340-residue protein sequence, read N- to C-terminus: DNA primase large subunit PriL (340 aa).

4 residues coordinate [4Fe-4S] cluster: Cys229, Cys301, Cys310, and Cys318.

It belongs to the eukaryotic-type primase large subunit family. In terms of assembly, heterodimer of a small subunit (PriS) and a large subunit (PriL). Requires [4Fe-4S] cluster as cofactor.

In terms of biological role, regulatory subunit of DNA primase, an RNA polymerase that catalyzes the synthesis of short RNA molecules used as primers for DNA polymerase during DNA replication. Stabilizes and modulates the activity of the small subunit, increasing the rate of DNA synthesis, and conferring RNA synthesis capability. The DNA polymerase activity may enable DNA primase to also catalyze primer extension after primer synthesis. May also play a role in DNA repair. This is DNA primase large subunit PriL from Thermoplasma acidophilum (strain ATCC 25905 / DSM 1728 / JCM 9062 / NBRC 15155 / AMRC-C165).